The primary structure comprises 280 residues: Putative pyruvate, phosphate dikinase regulatory protein (280 aa).

Position 149-156 (149-156) interacts with ADP; the sequence is GVSRSSKT.

Belongs to the pyruvate, phosphate/water dikinase regulatory protein family. PDRP subfamily.

It catalyses the reaction N(tele)-phospho-L-histidyl/L-threonyl-[pyruvate, phosphate dikinase] + ADP = N(tele)-phospho-L-histidyl/O-phospho-L-threonyl-[pyruvate, phosphate dikinase] + AMP + H(+). The catalysed reaction is N(tele)-phospho-L-histidyl/O-phospho-L-threonyl-[pyruvate, phosphate dikinase] + phosphate + H(+) = N(tele)-phospho-L-histidyl/L-threonyl-[pyruvate, phosphate dikinase] + diphosphate. Functionally, bifunctional serine/threonine kinase and phosphorylase involved in the regulation of the pyruvate, phosphate dikinase (PPDK) by catalyzing its phosphorylation/dephosphorylation. This Novosphingobium aromaticivorans (strain ATCC 700278 / DSM 12444 / CCUG 56034 / CIP 105152 / NBRC 16084 / F199) protein is Putative pyruvate, phosphate dikinase regulatory protein.